A 404-amino-acid polypeptide reads, in one-letter code: Probable tRNA sulfurtransferase (404 aa).

One can recognise a THUMP domain in the interval Glu-61–Glu-166. ATP is bound by residues Leu-184–Leu-185, His-209–Phe-210, Arg-266, Gly-288, and Gln-297.

It belongs to the ThiI family.

It localises to the cytoplasm. The enzyme catalyses [ThiI sulfur-carrier protein]-S-sulfanyl-L-cysteine + a uridine in tRNA + 2 reduced [2Fe-2S]-[ferredoxin] + ATP + H(+) = [ThiI sulfur-carrier protein]-L-cysteine + a 4-thiouridine in tRNA + 2 oxidized [2Fe-2S]-[ferredoxin] + AMP + diphosphate. The catalysed reaction is [ThiS sulfur-carrier protein]-C-terminal Gly-Gly-AMP + S-sulfanyl-L-cysteinyl-[cysteine desulfurase] + AH2 = [ThiS sulfur-carrier protein]-C-terminal-Gly-aminoethanethioate + L-cysteinyl-[cysteine desulfurase] + A + AMP + 2 H(+). It participates in cofactor biosynthesis; thiamine diphosphate biosynthesis. Its function is as follows. Catalyzes the ATP-dependent transfer of a sulfur to tRNA to produce 4-thiouridine in position 8 of tRNAs, which functions as a near-UV photosensor. Also catalyzes the transfer of sulfur to the sulfur carrier protein ThiS, forming ThiS-thiocarboxylate. This is a step in the synthesis of thiazole, in the thiamine biosynthesis pathway. The sulfur is donated as persulfide by IscS. The protein is Probable tRNA sulfurtransferase of Bacillus cereus (strain ZK / E33L).